Here is a 149-residue protein sequence, read N- to C-terminus: Transcription antitermination protein NusB (149 aa).

It belongs to the NusB family.

In terms of biological role, involved in transcription antitermination. Required for transcription of ribosomal RNA (rRNA) genes. Binds specifically to the boxA antiterminator sequence of the ribosomal RNA (rrn) operons. In Chromobacterium violaceum (strain ATCC 12472 / DSM 30191 / JCM 1249 / CCUG 213 / NBRC 12614 / NCIMB 9131 / NCTC 9757 / MK), this protein is Transcription antitermination protein NusB.